Consider the following 256-residue polypeptide: tRNA pseudouridine synthase A 1 (256 aa).

Asp-53 functions as the Nucleophile in the catalytic mechanism. Residue Tyr-111 participates in substrate binding.

Belongs to the tRNA pseudouridine synthase TruA family. As to quaternary structure, homodimer.

It carries out the reaction uridine(38/39/40) in tRNA = pseudouridine(38/39/40) in tRNA. Its function is as follows. Formation of pseudouridine at positions 38, 39 and 40 in the anticodon stem and loop of transfer RNAs. This is tRNA pseudouridine synthase A 1 from Protochlamydia amoebophila (strain UWE25).